Reading from the N-terminus, the 696-residue chain is MVGSKDIDLFNLRENEQIVSPCLIVHGKCNKQNGAKTVQVQHPQLPPITYPIHNQFFKATVILTPGENKLTFVTDTNTARTIVCYYTPLTQNPPVHLCLILAKDSPLQFDSPREQKDREGGNGLELAIKKLRLGARLMQAYTNEQMLRNSMGNRTFPFVEEFTWDTLFERPAMRNTIKIHVVRSEKTVKEIQDPDIAQQNSKGKNTGALFGIAMDALKSYGGPFTNNEKPVQAACMFLDTHWDGKLIRGHAALGGGDDSIKLAIFGSHGLYSWPTCLEQLVPYFTDETRSSTSEVANDCNECGTYWECLTITLGAFMHEIGHLLGCPHQESGVMLRGYTTLNRSFLTKEAYSVRTNSTGASPPIFPKEECTWNRLDTVRFLYHPSFTLPQDYYDPSFMRPTKLGGYPNIKHSVYPLGNGSCRILSPTGIYLIEIICDDLARGHIEYLPVSLGGQGPQREVIVTLDDLRARLPKNELAKFGNTFKLKILSVNAPETEFDKFPSLLDVQPLDMSKYGFSKNVQGIKSPLYGRSDGGNAVGVVAFDVRLVTAVRIYHGYALDGVRFYYKEKPTGTKDAPASKPSVPPRNYFSKITHSIKNHASINEENLKSVLFGHETQNFTDATLEPGEIIIGFNLRCGAWVDAIQIITSHGRMTDMFGNKDGGGFAELQPPNGQYILGVTGRVGQWVDAFGIIYGAL.

A Glycyl lysine isopeptide (Lys-Gly) (interchain with G-Cter in ubiquitin) cross-link involves residue Lys-245. His-318 is a binding site for Zn(2+). Residue Glu-319 is part of the active site. The Zn(2+) site is built by His-322 and His-328. Ser-361 bears the Phosphoserine mark. Residues Lys-478, Lys-518, Lys-579, Lys-590, and Lys-596 each participate in a glycyl lysine isopeptide (Lys-Gly) (interchain with G-Cter in ubiquitin) cross-link. Residues 522 to 695 (GIKSPLYGRS…VDAFGIIYGA (174 aa)) enclose the Jacalin-type lectin domain.

This sequence belongs to the peptidase M10B family. The cofactor is Zn(2+).

The protein resides in the cytoplasm. The sequence is that of Putative zinc metalloproteinase YIL108W from Saccharomyces cerevisiae (strain ATCC 204508 / S288c) (Baker's yeast).